Here is a 446-residue protein sequence, read N- to C-terminus: Tubulin beta-6 chain (446 aa).

The MREI motif signature appears at 1 to 4 (MREI). Positions 11, 69, 138, 142, 143, and 144 each coordinate GTP. Glu69 is a binding site for Mg(2+). Ser172 carries the post-translational modification Phosphoserine; by CDK1. GTP-binding residues include Asn204 and Asn226. Glu438 carries the 5-glutamyl polyglutamate modification.

The protein belongs to the tubulin family. In terms of assembly, dimer of alpha and beta chains. A typical microtubule is a hollow water-filled tube with an outer diameter of 25 nm and an inner diameter of 15 nM. Alpha-beta heterodimers associate head-to-tail to form protofilaments running lengthwise along the microtubule wall with the beta-tubulin subunit facing the microtubule plus end conferring a structural polarity. Microtubules usually have 13 protofilaments but different protofilament numbers can be found in some organisms and specialized cells. Mg(2+) is required as a cofactor. In terms of processing, some glutamate residues at the C-terminus are polyglutamylated, resulting in polyglutamate chains on the gamma-carboxyl group. Polyglutamylation plays a key role in microtubule severing by spastin (SPAST). SPAST preferentially recognizes and acts on microtubules decorated with short polyglutamate tails: severing activity by SPAST increases as the number of glutamates per tubulin rises from one to eight, but decreases beyond this glutamylation threshold. Glutamylation is also involved in cilia motility. Some glutamate residues at the C-terminus are monoglycylated but not polyglycylated due to the absence of functional TTLL10 in human. Monoglycylation is mainly limited to tubulin incorporated into cilia and flagella axonemes, which is required for their stability and maintenance. Flagella glycylation controls sperm motility. Both polyglutamylation and monoglycylation can coexist on the same protein on adjacent residues, and lowering glycylation levels increases polyglutamylation, and reciprocally. Post-translationally, phosphorylated on Ser-172 by CDK1 during the cell cycle, from metaphase to telophase, but not in interphase. This phosphorylation inhibits tubulin incorporation into microtubules. Ubiquitous. Maximal expression in breast and lung, where it represents around 10% of all beta-tubulins. Largely decreased expression in most cancerous tissues.

It is found in the cytoplasm. Its subcellular location is the cytoskeleton. Tubulin is the major constituent of microtubules, a cylinder consisting of laterally associated linear protofilaments composed of alpha- and beta-tubulin heterodimers. Microtubules grow by the addition of GTP-tubulin dimers to the microtubule end, where a stabilizing cap forms. Below the cap, tubulin dimers are in GDP-bound state, owing to GTPase activity of alpha-tubulin. The chain is Tubulin beta-6 chain (TUBB6) from Homo sapiens (Human).